The primary structure comprises 99 residues: Pterin-4-alpha-carbinolamine dehydratase (99 aa).

The protein belongs to the pterin-4-alpha-carbinolamine dehydratase family.

The enzyme catalyses (4aS,6R)-4a-hydroxy-L-erythro-5,6,7,8-tetrahydrobiopterin = (6R)-L-erythro-6,7-dihydrobiopterin + H2O. Its function is as follows. Involved in tetrahydrobiopterin biosynthesis. This is Pterin-4-alpha-carbinolamine dehydratase (pcbd) from Dictyostelium discoideum (Social amoeba).